Here is a 445-residue protein sequence, read N- to C-terminus: MSGAFGAMNPAAAPLVWEVGALCRAVSDALQARFNPVAVRGEISGFSRAASGHCYFSIKDAGGQIRCAMFRRAAQLMDFSPRDGELVELRGRLGVYEQRGDLQLVVESMQRAGQGALFEQFLRLKARLEAEGLFDAARKRSLPPLPRGIGVVTSPGAAALHDVITALRRRVPHIPVVLVPALVQGVQAPASLIDALQRLYGLAREGAGSVDGSVAGAPPIDTILLVRGGGSIEDLWAFNDERLARTIVQSPVPLISGVGHETDFTIADFCADLRAPTPTAAAELVSQPREVWMGALQLMQGRLEDGVQRLLDRQQQRLDLAAQRLGRPSEQLARSRLQLSRQAQRLRHAMQLRLQRMDHAGQGLQAQLPAGMRRGLDRRADHLARMELRLQLLDPRLVLQRGYALLTDAEGHPVTEARSAPPGTALQAQLADGSLDLVVTQPRLL.

The protein belongs to the XseA family. In terms of assembly, heterooligomer composed of large and small subunits.

It is found in the cytoplasm. It catalyses the reaction Exonucleolytic cleavage in either 5'- to 3'- or 3'- to 5'-direction to yield nucleoside 5'-phosphates.. Bidirectionally degrades single-stranded DNA into large acid-insoluble oligonucleotides, which are then degraded further into small acid-soluble oligonucleotides. This is Exodeoxyribonuclease 7 large subunit from Delftia acidovorans (strain DSM 14801 / SPH-1).